Consider the following 275-residue polypeptide: Mitochondrial fission factor homolog A (275 aa).

The Cytoplasmic segment spans residues 1-255 (MAEVNRIHYE…ENKERAKREM (255 aa)). The interval 100 to 171 (DFLEPEPAAN…PLISPEDSQN (72 aa)) is disordered. Residues 114–130 (PREEMKSHFRSRREQCR) are compositionally biased toward basic and acidic residues. Over residues 131-142 (SENSTMRRNGQI) the composition is skewed to polar residues. The stretch at 223–253 (LTDAASLRRQIIKLNRRLQLLEHENKERAKR) forms a coiled coil. A helical; Anchor for type IV membrane protein membrane pass occupies residues 256–273 (VMYSLTVAFWLVNSWIWL). The Extracellular segment spans residues 274–275 (RR).

Belongs to the Tango11 family.

It is found in the mitochondrion outer membrane. It localises to the peroxisome. Its function is as follows. Plays a role in mitochondrial and peroxisomal fission. Promotes the recruitment and association of the fission mediator dynamin-related protein 1 (DNM1L) to the mitochondrial surface. The sequence is that of Mitochondrial fission factor homolog A from Danio rerio (Zebrafish).